The primary structure comprises 435 residues: Type A flavoprotein fprA (435 aa).

The zinc metallo-hydrolase stretch occupies residues 48 to 228; it reads ANGTTYNAYA…PFRSFVAQVL (181 aa). Fe cation contacts are provided by H98, E100, D102, H167, D186, and H243. A Flavodoxin-like domain is found at 276-415; the sequence is LLIFYVSAYR…EGRAFGRRLA (140 aa).

In the N-terminal section; belongs to the zinc metallo-hydrolase group 3 family. As to quaternary structure, homodimer. Requires FMN as cofactor. It depends on Fe cation as a cofactor.

Functionally, low-potential electron donor to a number of redox enzymes. This is Type A flavoprotein fprA (fprA) from Rhodobacter capsulatus (Rhodopseudomonas capsulata).